A 137-amino-acid chain; its full sequence is ATP synthase epsilon chain, chloroplastic (137 aa).

Belongs to the ATPase epsilon chain family. As to quaternary structure, F-type ATPases have 2 components, CF(1) - the catalytic core - and CF(0) - the membrane proton channel. CF(1) has five subunits: alpha(3), beta(3), gamma(1), delta(1), epsilon(1). CF(0) has three main subunits: a, b and c.

It localises to the plastid. It is found in the chloroplast thylakoid membrane. Its function is as follows. Produces ATP from ADP in the presence of a proton gradient across the membrane. In Bigelowiella natans (Pedinomonas minutissima), this protein is ATP synthase epsilon chain, chloroplastic.